A 453-amino-acid polypeptide reads, in one-letter code: UDP-N-acetylmuramoylalanine--D-glutamate ligase (453 aa).

117–123 (GTNGKTT) lines the ATP pocket.

Belongs to the MurCDEF family.

The protein localises to the cytoplasm. The enzyme catalyses UDP-N-acetyl-alpha-D-muramoyl-L-alanine + D-glutamate + ATP = UDP-N-acetyl-alpha-D-muramoyl-L-alanyl-D-glutamate + ADP + phosphate + H(+). It functions in the pathway cell wall biogenesis; peptidoglycan biosynthesis. Cell wall formation. Catalyzes the addition of glutamate to the nucleotide precursor UDP-N-acetylmuramoyl-L-alanine (UMA). The polypeptide is UDP-N-acetylmuramoylalanine--D-glutamate ligase (Caldicellulosiruptor saccharolyticus (strain ATCC 43494 / DSM 8903 / Tp8T 6331)).